Consider the following 125-residue polypeptide: Cysteine proteinase inhibitor 3 (125 aa).

The first 22 residues, 1–22, serve as a signal peptide directing secretion; that stretch reads MESKTFWIVTLLLCGTIQLAIC. Positions 36 to 124 constitute a Cystatin domain; that stretch reads GGVHDLRGNQ…KQLQEFKESS (89 aa). Residues 80–84 carry the Secondary area of contact motif; it reads QVVAG.

It belongs to the cystatin family. Phytocystatin subfamily.

It localises to the secreted. In terms of biological role, specific inhibitor of cysteine proteinases. Probably involved in the regulation of endogenous processes and in defense against pests and pathogens. This is Cysteine proteinase inhibitor 3 (CYS3) from Arabidopsis thaliana (Mouse-ear cress).